Reading from the N-terminus, the 179-residue chain is MAKLTLQEQLLKAGLVTSKKAAKVERTAKKSRVQAREARAAVEENKKAQLERDKQLSEQQKQAALAKEYKAQVKQLIEMNRITIANGDIGFNFTDGNLIKKIFVDKLTQAQLINGRLAIARLLVDNNSEGEYAIIPASVADKIAQRDASSIVLHSALSAEEQDEDDPYADFKVPDDLMW.

The interval 27 to 54 is disordered; it reads TAKKSRVQAREARAAVEENKKAQLERDK.

This is an uncharacterized protein from Escherichia coli (strain K12).